Reading from the N-terminus, the 95-residue chain is Large ribosomal subunit protein uL23 (95 aa).

Belongs to the universal ribosomal protein uL23 family. In terms of assembly, part of the 50S ribosomal subunit. Contacts protein L29, and trigger factor when it is bound to the ribosome.

One of the early assembly proteins it binds 23S rRNA. One of the proteins that surrounds the polypeptide exit tunnel on the outside of the ribosome. Forms the main docking site for trigger factor binding to the ribosome. This chain is Large ribosomal subunit protein uL23, found in Bacillus pumilus (strain SAFR-032).